A 230-amino-acid chain; its full sequence is Protein UPS2, mitochondrial (230 aa).

Residues 1–175 enclose the PRELI/MSF1 domain; sequence MKLFQNSYDF…VLQVFSENWE (175 aa).

This sequence belongs to the slowmo family. In terms of assembly, interacts with MDM35.

The protein resides in the mitochondrion inner membrane. It is found in the mitochondrion intermembrane space. Required for mitochondrial cristae morphogenesis and MGM1-processing. Controls the stability of mitochondrial phosphatidylethanolamine (PE). With UPS1, controls the level of cardiolipin in mitochondria. Cardiolipin is a unique phospholipid with four fatty acid chains and is present mainly in the mitochondrial inner membrane where it stabilizes the electron transport chain supercomplex between complexes III and IV through direct interaction of their subunits. In Saccharomyces cerevisiae (strain ATCC 204508 / S288c) (Baker's yeast), this protein is Protein UPS2, mitochondrial (UPS2).